The chain runs to 302 residues: Sulfate adenylyltransferase subunit 2 (302 aa).

Belongs to the PAPS reductase family. CysD subfamily. In terms of assembly, heterodimer composed of CysD, the smaller subunit, and CysN.

It catalyses the reaction sulfate + ATP + H(+) = adenosine 5'-phosphosulfate + diphosphate. It participates in sulfur metabolism; hydrogen sulfide biosynthesis; sulfite from sulfate: step 1/3. Functionally, with CysN forms the ATP sulfurylase (ATPS) that catalyzes the adenylation of sulfate producing adenosine 5'-phosphosulfate (APS) and diphosphate, the first enzymatic step in sulfur assimilation pathway. APS synthesis involves the formation of a high-energy phosphoric-sulfuric acid anhydride bond driven by GTP hydrolysis by CysN coupled to ATP hydrolysis by CysD. The polypeptide is Sulfate adenylyltransferase subunit 2 (Citrobacter koseri (strain ATCC BAA-895 / CDC 4225-83 / SGSC4696)).